The following is a 232-amino-acid chain: Large ribosomal subunit protein uL1 (232 aa).

Belongs to the universal ribosomal protein uL1 family. As to quaternary structure, part of the 50S ribosomal subunit.

In terms of biological role, binds directly to 23S rRNA. The L1 stalk is quite mobile in the ribosome, and is involved in E site tRNA release. Its function is as follows. Protein L1 is also a translational repressor protein, it controls the translation of the L11 operon by binding to its mRNA. The protein is Large ribosomal subunit protein uL1 of Methylorubrum populi (strain ATCC BAA-705 / NCIMB 13946 / BJ001) (Methylobacterium populi).